The sequence spans 595 residues: Elongation factor 4 (595 aa).

One can recognise a tr-type G domain in the interval 2–183; the sequence is KNIRNFCIIA…AIVEQVPAPA (182 aa). GTP-binding positions include 14–19 and 130–133; these read DHGKST and NKVD.

The protein belongs to the TRAFAC class translation factor GTPase superfamily. Classic translation factor GTPase family. LepA subfamily.

Its subcellular location is the cell inner membrane. It catalyses the reaction GTP + H2O = GDP + phosphate + H(+). Functionally, required for accurate and efficient protein synthesis under certain stress conditions. May act as a fidelity factor of the translation reaction, by catalyzing a one-codon backward translocation of tRNAs on improperly translocated ribosomes. Back-translocation proceeds from a post-translocation (POST) complex to a pre-translocation (PRE) complex, thus giving elongation factor G a second chance to translocate the tRNAs correctly. Binds to ribosomes in a GTP-dependent manner. The protein is Elongation factor 4 of Porphyromonas gingivalis (strain ATCC BAA-308 / W83).